The primary structure comprises 615 residues: Semenogelin-1 (615 aa).

The first 23 residues, 1–23, serve as a signal peptide directing secretion; sequence MKPIIFLVLSLLLILEKQAAVMG. Q24 carries the post-translational modification Pyrrolidone carboxylic acid. Disordered regions lie at residues 24–118, 133–160, and 172–585; these read QKGG…EHGK, GHAP…SQDS, and GKEQ…HRSY. The segment covering 34–46 has biased composition (polar residues); that stretch reads SESSQFPHGQKGQ. Basic and acidic residues predominate over residues 50–80; sequence ARKDKQHAESKRSVSIEHTYHVDIPDHDQTR. The segment covering 81 to 91 has biased composition (polar residues); it reads TSKQYDLNAQN. Residues 107–118 are compositionally biased toward basic and acidic residues; that stretch reads FNHKQEGREHGK. Polar residues-rich tracts occupy residues 138-160, 177-196, and 209-224; these read GTQN…SQDS, SVSG…SPVL, and TQNS…NVNE. N-linked (GlcNAc...) asparagine glycans are attached at residues N148, N184, and N223. Over residues 241–253 the composition is skewed to basic and acidic residues; the sequence is QEDRLQHGSKDVF. Polar residues predominate over residues 254-265; that stretch reads SKNQNQTRNPNQ. N-linked (GlcNAc...) asparagine glycans are attached at residues N258 and N275. Residues 283-300 show a composition bias toward basic and acidic residues; it reads TEERRPNHGEKGIQKDAS. Residue N306 is glycosylated (N-linked (GlcNAc...) asparagine). Over residues 308-317 the composition is skewed to basic and acidic residues; the sequence is TEDKMHDKSQ. The N-linked (GlcNAc...) asparagine glycan is linked to N332. A compositionally biased stretch (basic and acidic residues) spans 341–358; sequence TEERRPNHGEKGIQKDAS. N-linked (GlcNAc...) asparagine glycosylation occurs at N364. Residues 366–375 are compositionally biased toward basic and acidic residues; the sequence is TEDKMHDKSQ. N-linked (GlcNAc...) asparagine glycosylation occurs at N390. A compositionally biased stretch (basic and acidic residues) spans 399–416; it reads TEERRPNHGEKGIQKDAS. N422 carries N-linked (GlcNAc...) asparagine glycosylation. Basic and acidic residues predominate over residues 424 to 433; sequence TEDKMHDKSQ. N448 is a glycosylation site (N-linked (GlcNAc...) asparagine). Positions 457–474 are enriched in basic and acidic residues; that stretch reads TEERRPNHGEKGIQKDAS. An N-linked (GlcNAc...) asparagine glycan is attached at N480. Residues 481-491 are compositionally biased toward basic and acidic residues; that stretch reads KTEDKMHDKSQ. N506 is a glycosylation site (N-linked (GlcNAc...) asparagine). Positions 515–532 are enriched in basic and acidic residues; it reads TEERRPNHGEKGIQKDAS. N538 carries an N-linked (GlcNAc...) asparagine glycan. The segment covering 539 to 549 has biased composition (basic and acidic residues); that stretch reads KTEDEKHDKSQ. Polar residues predominate over residues 550–563; sequence KQVTTPSQDQQSGQ.

The protein belongs to the semenogelin family. As to quaternary structure, occurs in disulfide-linked complexes. Transglutaminase substrate. Post-translationally, rapidly cleaved after ejaculation by KLK3/PSA, resulting in liquefaction of the semen coagulum and the progressive release of motile spermatozoa.

It is found in the secreted. Functionally, predominant protein in semen. It participates in the formation of a gel matrix entrapping the accessory gland secretions and ejaculated spermatozoa. Fragments of semenogelin and/or fragments of the related proteins may contribute to the activation of progressive sperm movements as the gel-forming proteins are fragmented by KLK3/PSA. In Saguinus oedipus (Cotton-top tamarin), this protein is Semenogelin-1 (SEMG1).